We begin with the raw amino-acid sequence, 513 residues long: ATP synthase subunit alpha 2 (513 aa).

Glycine 169 to threonine 176 contacts ATP.

The protein belongs to the ATPase alpha/beta chains family. As to quaternary structure, F-type ATPases have 2 components, CF(1) - the catalytic core - and CF(0) - the membrane proton channel. CF(1) has five subunits: alpha(3), beta(3), gamma(1), delta(1), epsilon(1). CF(0) has three main subunits: a(1), b(2) and c(9-12). The alpha and beta chains form an alternating ring which encloses part of the gamma chain. CF(1) is attached to CF(0) by a central stalk formed by the gamma and epsilon chains, while a peripheral stalk is formed by the delta and b chains.

Its subcellular location is the cell inner membrane. The enzyme catalyses ATP + H2O + 4 H(+)(in) = ADP + phosphate + 5 H(+)(out). Produces ATP from ADP in the presence of a proton gradient across the membrane. The alpha chain is a regulatory subunit. This is ATP synthase subunit alpha 2 from Paraburkholderia xenovorans (strain LB400).